The chain runs to 127 residues: Large ribosomal subunit protein bL19 (127 aa).

Belongs to the bacterial ribosomal protein bL19 family.

Functionally, this protein is located at the 30S-50S ribosomal subunit interface and may play a role in the structure and function of the aminoacyl-tRNA binding site. This chain is Large ribosomal subunit protein bL19, found in Bradyrhizobium sp. (strain BTAi1 / ATCC BAA-1182).